We begin with the raw amino-acid sequence, 188 residues long: Elongation factor P (188 aa).

This sequence belongs to the elongation factor P family.

It localises to the cytoplasm. Its pathway is protein biosynthesis; polypeptide chain elongation. Involved in peptide bond synthesis. Stimulates efficient translation and peptide-bond synthesis on native or reconstituted 70S ribosomes in vitro. Probably functions indirectly by altering the affinity of the ribosome for aminoacyl-tRNA, thus increasing their reactivity as acceptors for peptidyl transferase. This chain is Elongation factor P, found in Chloroherpeton thalassium (strain ATCC 35110 / GB-78).